The sequence spans 717 residues: Fatty acid oxidation complex subunit alpha (717 aa).

Residues 1 to 190 (MIHAGNAITV…KDGAVDAVVA (190 aa)) are enoyl-CoA hydratase/isomerase. Asp298 contributes to the substrate binding site. A 3-hydroxyacyl-CoA dehydrogenase region spans residues 313-717 (HPVNQAAVLG…MAANNKKFYG (405 aa)). NAD(+) contacts are provided by residues Met326, Asp345, 402 to 404 (VTE), Lys409, and Ser431. His452 acts as the For 3-hydroxyacyl-CoA dehydrogenase activity in catalysis. Position 455 (Asn455) interacts with NAD(+). Asn502 contributes to the substrate binding site.

The protein in the N-terminal section; belongs to the enoyl-CoA hydratase/isomerase family. In the C-terminal section; belongs to the 3-hydroxyacyl-CoA dehydrogenase family. In terms of assembly, heterotetramer of two alpha chains (FadB) and two beta chains (FadA).

It catalyses the reaction a (3S)-3-hydroxyacyl-CoA + NAD(+) = a 3-oxoacyl-CoA + NADH + H(+). The catalysed reaction is a (3S)-3-hydroxyacyl-CoA = a (2E)-enoyl-CoA + H2O. It carries out the reaction a 4-saturated-(3S)-3-hydroxyacyl-CoA = a (3E)-enoyl-CoA + H2O. The enzyme catalyses (3S)-3-hydroxybutanoyl-CoA = (3R)-3-hydroxybutanoyl-CoA. It catalyses the reaction a (3Z)-enoyl-CoA = a 4-saturated (2E)-enoyl-CoA. The catalysed reaction is a (3E)-enoyl-CoA = a 4-saturated (2E)-enoyl-CoA. The protein operates within lipid metabolism; fatty acid beta-oxidation. Involved in the aerobic and anaerobic degradation of long-chain fatty acids via beta-oxidation cycle. Catalyzes the formation of 3-oxoacyl-CoA from enoyl-CoA via L-3-hydroxyacyl-CoA. It can also use D-3-hydroxyacyl-CoA and cis-3-enoyl-CoA as substrate. This is Fatty acid oxidation complex subunit alpha from Acinetobacter baumannii (strain AB307-0294).